The sequence spans 422 residues: tRNA hydroxylation protein P (422 aa).

Residues 1–58 (MNQVELLSPAGNLKKLKIALNYGADAVYGGVSHFSLRNRAGKEFTLETFKEGIDYAHA) form the signal peptide.

This sequence belongs to the peptidase U32 family.

Functionally, involved in prephenate-dependent formation of 5-hydroxyuridine (ho5U) modification at position 34 in tRNAs, the first step in 5-carboxymethoxyuridine (cmo5U) biosynthesis. This Helicobacter pylori (strain J99 / ATCC 700824) (Campylobacter pylori J99) protein is tRNA hydroxylation protein P.